The following is a 226-amino-acid chain: V-type proton ATPase subunit E 2 (226 aa).

This sequence belongs to the V-ATPase E subunit family. In terms of assembly, V-ATPase is a heteromultimeric enzyme made up of two complexes: the ATP-hydrolytic V1 complex and the proton translocation V0 complex. The V1 complex consists of three catalytic AB heterodimers that form a heterohexamer, three peripheral stalks each consisting of EG heterodimers, one central rotor including subunits D and F, and the regulatory subunits C and H. The proton translocation complex V0 consists of the proton transport subunit a, a ring of proteolipid subunits c9c'', rotary subunit d, subunits e and f, and the accessory subunits ATP6AP1/Ac45 and ATP6AP2/PRR. Testis specific.

Functionally, subunit of the V1 complex of vacuolar(H+)-ATPase (V-ATPase), a multisubunit enzyme composed of a peripheral complex (V1) that hydrolyzes ATP and a membrane integral complex (V0) that translocates protons. V-ATPase is responsible for acidifying and maintaining the pH of intracellular compartments and in some cell types, is targeted to the plasma membrane, where it is responsible for acidifying the extracellular environment. This chain is V-type proton ATPase subunit E 2 (ATP6V1E2), found in Homo sapiens (Human).